Reading from the N-terminus, the 341-residue chain is Malate dehydrogenase 1, mitochondrial (341 aa).

A mitochondrion-targeting transit peptide spans 1–22 (MFRSMLVRSSASAKQAVIRRSF). NAD(+)-binding positions include 36–42 (GAAGGIG) and Asp-62. Residues Arg-109 and Arg-115 each contribute to the substrate site. Residues Asn-122 and 145–147 (ISN) contribute to the NAD(+) site. Asn-147 and Arg-181 together coordinate substrate. The active-site Proton acceptor is His-205. Met-256 lines the NAD(+) pocket.

The protein belongs to the LDH/MDH superfamily. MDH type 1 family. In terms of assembly, homodimer. Forms intramolecular disulfide bonds. In terms of tissue distribution, expressed in rosette leaves.

It is found in the mitochondrion matrix. It carries out the reaction (S)-malate + NAD(+) = oxaloacetate + NADH + H(+). Its activity is regulated as follows. Negatively regulated by ATP. Not redox-regulated. The formation of intramolecular disulfide bonds does not alter enzymatic activity. In terms of biological role, catalyzes a reversible NAD-dependent dehydrogenase reaction involved in central metabolism and redox homeostasis between organelle compartments. Required for carbon dioxide and energy partitioning in leaves. May limit photorespiration during the dark phase. Its activity is essential to shuttle reductants out from the mitochondria to support the photorespiratory flux. Can convert 2-oxoglutarate to (S)-2-hydroxyglutarate in vitro. This is Malate dehydrogenase 1, mitochondrial from Arabidopsis thaliana (Mouse-ear cress).